The chain runs to 243 residues: MNRIKAVGYENNELKEKAQLLADQLNLQLDQNADTCLFVTPEKLTLKIRNFSLMFADFSTMTWSKRRGEGKKQGLIRACKPTKGIKILDATAGWGKDAAILATFGADVLMLERHPVMAALLADALSRRNEADIQKMCLSLIASDAISFLHSLQEKDYPDIIYIDPMHPERNKSALVKKEMQVLQQLIGTDYDAMELIKLSLSHVKSRVVVKWPQKVKPLLPPDASIDGKTVRFDIYMPQFSSN.

Residues 112–113 (ER) and Asp-164 each bind S-adenosyl-L-methionine.

It belongs to the methyltransferase superfamily. RsmJ family.

The protein localises to the cytoplasm. It catalyses the reaction guanosine(1516) in 16S rRNA + S-adenosyl-L-methionine = N(2)-methylguanosine(1516) in 16S rRNA + S-adenosyl-L-homocysteine + H(+). In terms of biological role, specifically methylates the guanosine in position 1516 of 16S rRNA. The sequence is that of Ribosomal RNA small subunit methyltransferase J from Legionella pneumophila (strain Corby).